The following is a 630-amino-acid chain: Lysophospholipase 3 (630 aa).

The N-terminal stretch at 1-16 (MKALLSLLTAVAVATA) is a signal peptide. A PLA2c domain is found at 39-587 (SCPATRPSIR…KEYCWNGTVD (549 aa)). N-linked (GlcNAc...) asparagine glycosylation is found at Asn-56, Asn-95, Asn-164, Asn-220, Asn-283, Asn-351, Asn-390, Asn-443, Asn-456, Asn-462, Asn-493, Asn-514, Asn-542, Asn-566, and Asn-583. Asn-606 is lipidated: GPI-like-anchor amidated asparagine. A propeptide spans 607-630 (AAYTQGVTWLVGILAVGVAMGMTA) (removed in mature form).

The protein belongs to the lysophospholipase family. The GPI-like anchor contains a phosphoceramide lipid group.

The protein resides in the cell membrane. It carries out the reaction a 1-acyl-sn-glycero-3-phosphocholine + H2O = sn-glycerol 3-phosphocholine + a fatty acid + H(+). In terms of biological role, catalyzes the release of fatty acids from lysophospholipids. This chain is Lysophospholipase 3 (plb3), found in Aspergillus fumigatus (strain CBS 144.89 / FGSC A1163 / CEA10) (Neosartorya fumigata).